A 451-amino-acid polypeptide reads, in one-letter code: Proton-coupled amino acid transporter-like protein acs (451 aa).

Residues 1-48 (MNDDIKTVTVYPTTLELTTPTKSANGSNDDYDPHQHRELKNPTTNFQT) lie on the Cytoplasmic side of the membrane. The helical transmembrane segment at 49-69 (FAHFLKASVGTGVLAMPSAFA) threads the bilayer. The Extracellular portion of the chain corresponds to 70-80 (HAGYVNGTLLT). Asparagine 75 carries an N-linked (GlcNAc...) asparagine glycan. A helical membrane pass occupies residues 81–101 (LIIGSLALYCLHILIKCMYIL). Residues 102–136 (CKRQRVPYVSFSQAMNLGLKQGPPWLRCLAPIAVP) are Cytoplasmic-facing. A helical transmembrane segment spans residues 137 to 157 (FVDGFLAFYHFGICCVYVVFI). At 158–167 (AESIKQLVDE) the chain is on the extracellular side. A helical membrane pass occupies residues 168–188 (YLVVWDVRIHMCIIIVPLLLI). Residues 189 to 199 (YSIKNLKLLAP) are Cytoplasmic-facing. A helical transmembrane segment spans residues 200–220 (FSSAANLLLLVGFGIILYYIF). Topologically, residues 221–237 (EELPPLSERDPFVAAGK) are extracellular. The chain crosses the membrane as a helical span at residues 238–258 (LPTFFGTVLFALEAVGVILAI). Residues 259–272 (EENMATPKSFVGPC) lie on the Cytoplasmic side of the membrane. Residues 273–293 (GILNSGMSIVLGLYVLLGFFG) traverse the membrane as a helical segment. Residues 294–320 (YWKYGNESEGSITLNIPQSEIPAQVVK) lie on the Extracellular side of the membrane. The N-linked (GlcNAc...) asparagine glycan is linked to asparagine 299. A helical membrane pass occupies residues 321–341 (VFFAITTWISYALQGYVTAHI). Residues 342–357 (LWDKYLAKRFKETRQT) lie on the Cytoplasmic side of the membrane. The chain crosses the membrane as a helical span at residues 358–378 (FYELIFRAIIVLLTFGCAVAI). Over 379–382 (PDLS) the chain is Extracellular. A helical membrane pass occupies residues 383 to 403 (VFLSLVGSFCLSILGLIFPVL). Over 404–420 (LQICVQYTEGYGPFRIK) the chain is Cytoplasmic. Residues 421–441 (LIINLLLLCFGIFGGVVGTYV) form a helical membrane-spanning segment. Over 442 to 451 (SILDIIAVYK) the chain is Extracellular.

This sequence belongs to the amino acid/polyamine transporter 2 family. Expressed in the proximal and distal regions of the midgut; expressed in enterocytes and progenitor cells. Expression increases in response to intestinal bacterial infection and spreads further into the midgut, eventually covering the entire midgut.

Its subcellular location is the cell membrane. The protein resides in the late endosome membrane. It is found in the lysosome membrane. It localises to the basal cell membrane. In terms of biological role, amino acid transporter which has pH-dependent electrogenic transport activity for alanine, glycine and proline. Plays a role in positive regulation of growth by directly or indirectly modulating the effects of the TOR signaling pathway. Required in enterocytes for the efficient recovery of gut epithelium following the cytoplasmic purge response to bacterial infection. Acts cell-autonomously to promote the retrograde transport of amino acids into the intestinal epithelium. Acts non-cell-autonomously through the insulin signaling pathway to stimulate Myc expression and the release of amino acids from nutrient stores into the hemolymph. The protein is Proton-coupled amino acid transporter-like protein acs of Drosophila melanogaster (Fruit fly).